The primary structure comprises 282 residues: Shikimate dehydrogenase (NADP(+)) (282 aa).

Shikimate-binding positions include 16-18 (SLS) and T63. Residue K67 is the Proton acceptor of the active site. Residues N88 and D103 each coordinate shikimate. NADP(+) contacts are provided by residues 128–132 (GAGGA) and G243.

This sequence belongs to the shikimate dehydrogenase family. As to quaternary structure, homodimer.

The enzyme catalyses shikimate + NADP(+) = 3-dehydroshikimate + NADPH + H(+). It functions in the pathway metabolic intermediate biosynthesis; chorismate biosynthesis; chorismate from D-erythrose 4-phosphate and phosphoenolpyruvate: step 4/7. Its function is as follows. Involved in the biosynthesis of the chorismate, which leads to the biosynthesis of aromatic amino acids. Catalyzes the reversible NADPH linked reduction of 3-dehydroshikimate (DHSA) to yield shikimate (SA). The chain is Shikimate dehydrogenase (NADP(+)) from Xylella fastidiosa (strain Temecula1 / ATCC 700964).